The primary structure comprises 443 residues: Carboxypeptidase M (443 aa).

Residues 1-17 (MDRARLWLGLLLPVVAA) form the signal peptide. The Peptidase M14 domain maps to 21–311 (RYHHQEGMEA…ASLIEYIKQV (291 aa)). N-linked (GlcNAc...) asparagine glycosylation is present at Asn-38. Zn(2+) is bound by residues His-83 and Glu-86. 3 cysteine pairs are disulfide-bonded: Cys-138/Cys-285, Cys-242/Cys-284, and Cys-341/Cys-410. Asn-164 carries N-linked (GlcNAc...) asparagine glycosylation. His-190 lines the Zn(2+) pocket. Catalysis depends on Glu-281, which acts as the Proton donor/acceptor. N-linked (GlcNAc...) asparagine glycosylation occurs at Asn-363. Ser-423 carries GPI-anchor amidated serine lipidation. Positions 424–443 (AATKPSLGVFFMTLLYVFFK) are cleaved as a propeptide — removed in mature form.

This sequence belongs to the peptidase M14 family. Zn(2+) serves as cofactor.

It localises to the cell membrane. It catalyses the reaction Cleavage of C-terminal arginine or lysine residues from polypeptides.. In terms of biological role, specifically removes C-terminal basic residues (Arg or Lys) from peptides and proteins. It is believed to play important roles in the control of peptide hormone and growth factor activity at the cell surface, and in the membrane-localized degradation of extracellular proteins. This chain is Carboxypeptidase M (Cpm), found in Mus musculus (Mouse).